Here is a 333-residue protein sequence, read N- to C-terminus: MGVALRDILADYKTPVTWEGLSGVAAVDANNTLYQFLTIIRQPDGTPLMDAKGRVTSHLSGILFRMVNFLEKGIKPVFVFDGKPPELKQETNAERKKLRDEAGEKYKEAVERGDEEEAYRQARSATRVDETIIATSKELLDLLGIPYVQAPSEGEAQAAFMVQRGDARFAVSQDYDTLLFGAPLLMRNLTVSGKRKIRGRAVTVNPERLVLSEVLSGLSLTREQLVEVGILVGTDFNPGAAGVGAKTALKIVKSGGFAQKLAEKCPGFDPAPVADFFLKPPVTTEYELAWGHPCVEGIKKMLCDGYDFAPERVDAALERYSAKAGQKTLESFF.

The tract at residues 1–99 (MGVALRDILA…ETNAERKKLR (99 aa)) is N-domain. The Mg(2+) site is built by D28, D81, E153, E155, D174, D176, and D235. Residues 117–256 (EAYRQARSAT…TALKIVKSGG (140 aa)) are I-domain. The segment at 325 to 333 (GQKTLESFF) is interaction with PCNA.

This sequence belongs to the XPG/RAD2 endonuclease family. FEN1 subfamily. In terms of assembly, interacts with PCNA. PCNA stimulates the nuclease activity without altering cleavage specificity. Mg(2+) is required as a cofactor.

In terms of biological role, structure-specific nuclease with 5'-flap endonuclease and 5'-3' exonuclease activities involved in DNA replication and repair. During DNA replication, cleaves the 5'-overhanging flap structure that is generated by displacement synthesis when DNA polymerase encounters the 5'-end of a downstream Okazaki fragment. Binds the unpaired 3'-DNA end and kinks the DNA to facilitate 5' cleavage specificity. Cleaves one nucleotide into the double-stranded DNA from the junction in flap DNA, leaving a nick for ligation. Also involved in the base excision repair (BER) pathway. Acts as a genome stabilization factor that prevents flaps from equilibrating into structures that lead to duplications and deletions. Also possesses 5'-3' exonuclease activity on nicked or gapped double-stranded DNA. In Methanoregula boonei (strain DSM 21154 / JCM 14090 / 6A8), this protein is Flap endonuclease 1.